The following is a 35-amino-acid chain: Manganese peroxidase (35 aa).

Basic and acidic residues predominate over residues 1 to 11; sequence LSLLGHDERVT. The tract at residues 1–35 is disordered; sequence LSLLGHDERVTPEPFDSVTAQNARGNQADVQSLPR. A compositionally biased stretch (polar residues) spans 18–35; that stretch reads VTAQNARGNQADVQSLPR.

The protein belongs to the peroxidase family. Heme b is required as a cofactor. Requires Ca(2+) as cofactor.

The enzyme catalyses 2 Mn(2+) + H2O2 + 2 H(+) = 2 Mn(3+) + 2 H2O. Its function is as follows. Has manganese peroxidase activity. The polypeptide is Manganese peroxidase (Irpex lacteus (Milk-white toothed polypore)).